We begin with the raw amino-acid sequence, 548 residues long: Putative malate oxidoreductase [NAD] (548 aa).

Tyrosine 96 acts as the Proton donor in catalysis. Catalysis depends on lysine 169, which acts as the Proton acceptor. A divalent metal cation contacts are provided by glutamate 240, aspartate 241, and aspartate 264. NAD(+)-binding positions include 297–300 (AGTA), asparagine 410, and asparagine 455.

Belongs to the malic enzymes family. The cofactor is Mg(2+). It depends on Mn(2+) as a cofactor.

It catalyses the reaction (S)-malate + NAD(+) = pyruvate + CO2 + NADH. The catalysed reaction is oxaloacetate + H(+) = pyruvate + CO2. The polypeptide is Putative malate oxidoreductase [NAD] (mez) (Mycobacterium tuberculosis (strain CDC 1551 / Oshkosh)).